We begin with the raw amino-acid sequence, 470 residues long: Probable G-protein coupled receptor 152 (470 aa).

A disordered region spans residues 1–25 (MDTTMEADLGATGHRPRTELDDEDS). At 1-33 (MDTTMEADLGATGHRPRTELDDEDSYPQGGWDT) the chain is on the extracellular side. A helical transmembrane segment spans residues 34 to 54 (VFLVALLLLGLPANGLMAWLA). Topologically, residues 55 to 65 (GSQARHGAGTR) are cytoplasmic. The chain crosses the membrane as a helical span at residues 66 to 86 (LALLLLSLALSDFLFLAAAAF). Residues 87 to 105 (QILEIRHGGHWPLGTAACR) are Extracellular-facing. An intrachain disulfide couples Cys104 to Cys182. A helical membrane pass occupies residues 106–126 (FYYFLWGVSYSSGLFLLAALS). Over 127 to 148 (LDRCLLALCPHWYPGHRPVRLP) the chain is Cytoplasmic. A helical transmembrane segment spans residues 149-169 (LWVCAGVWVLATLFSVPWLVF). At 170-194 (PEAAVWWYDLVICLDFWDSEELSLR) the chain is on the extracellular side. A helical membrane pass occupies residues 195–215 (MLEVLGGFLPFLLLLVCHVLT). Residues 216–257 (QATACRTCHRQQQPAACRGFARVARTILSAYVVLRLPYQLAQ) are Cytoplasmic-facing. A helical transmembrane segment spans residues 258–278 (LLYLAFLWDVYSGYLLWEALV). Residues 279-281 (YSD) lie on the Extracellular side of the membrane. A helical membrane pass occupies residues 282–302 (YLILLNSCLSPFLCLMASADL). At 303-470 (RTLLRSVLSS…PEAAPGAGPT (168 aa)) the chain is on the cytoplasmic side. Residues 322-470 (PGSFTPTEPQ…PEAAPGAGPT (149 aa)) form a disordered region. Polar residues-rich tracts occupy residues 325-335 (FTPTEPQTQLD) and 348-414 (AQSQ…NVQT). Residues 415–425 (PAPAASSVPSP) are compositionally biased toward low complexity.

Belongs to the G-protein coupled receptor 1 family.

It localises to the cell membrane. In terms of biological role, orphan receptor. This Homo sapiens (Human) protein is Probable G-protein coupled receptor 152 (GPR152).